The primary structure comprises 476 residues: Adenosylhomocysteinase (476 aa).

T61, D140, and E200 together coordinate substrate. 201–203 lines the NAD(+) pocket; sequence TTT. Substrate is bound by residues K230 and D234. NAD(+) is bound by residues N235, 264 to 269, E287, N322, 343 to 345, and N389; these read GYGDVG and IGH.

This sequence belongs to the adenosylhomocysteinase family. NAD(+) serves as cofactor.

The protein localises to the cytoplasm. It catalyses the reaction S-adenosyl-L-homocysteine + H2O = L-homocysteine + adenosine. It functions in the pathway amino-acid biosynthesis; L-homocysteine biosynthesis; L-homocysteine from S-adenosyl-L-homocysteine: step 1/1. May play a key role in the regulation of the intracellular concentration of adenosylhomocysteine. The protein is Adenosylhomocysteinase of Acidovorax sp. (strain JS42).